We begin with the raw amino-acid sequence, 42 residues long: uncharacterized protein (42 aa).

This is an uncharacterized protein from Pasteurella multocida (strain Pm70).